The primary structure comprises 375 residues: Serpin B5 (375 aa).

N-linked (GlcNAc...) asparagine glycans are attached at residues N99, N133, N188, N298, and N361.

It belongs to the serpin family. Ov-serpin subfamily. Interacts with IRF6.

It localises to the secreted. It is found in the extracellular space. In terms of biological role, tumor suppressor. It blocks the growth, invasion, and metastatic properties of mammary tumors. As it does not undergo the S (stressed) to R (relaxed) conformational transition characteristic of active serpins, it exhibits no serine protease inhibitory activity. The sequence is that of Serpin B5 (Serpinb5) from Rattus norvegicus (Rat).